A 391-amino-acid chain; its full sequence is Protein ABCI12, chloroplastic (391 aa).

The N-terminal 63 residues, 1-63 (MNHSNLANPT…LAAKRVFIVR (63 aa)), are a transit peptide targeting the chloroplast. The next 5 helical transmembrane spans lie at 134 to 154 (ANLV…ILVL), 168 to 188 (LLSG…PPML), 229 to 249 (VGST…ICLA), 263 to 283 (FLFP…TLLL), and 370 to 390 (FASV…EYFL).

The protein localises to the plastid. It localises to the chloroplast. The protein resides in the membrane. The chain is Protein ABCI12, chloroplastic (ABCI12) from Arabidopsis thaliana (Mouse-ear cress).